The following is a 256-amino-acid chain: Hemin import ATP-binding protein HmuV (256 aa).

The ABC transporter domain maps to 2–239 (IHAFAVSVIR…ANVREVYQVD (238 aa)). 34 to 41 (GPNGAGKS) contributes to the ATP binding site.

Belongs to the ABC transporter superfamily. Heme (hemin) importer (TC 3.A.1.14.5) family. In terms of assembly, the complex is composed of two ATP-binding proteins (HmuV), two transmembrane proteins (HmuU) and a solute-binding protein (HmuT).

The protein localises to the cell inner membrane. Part of the ABC transporter complex HmuTUV involved in hemin import. Responsible for energy coupling to the transport system. The polypeptide is Hemin import ATP-binding protein HmuV (Hahella chejuensis (strain KCTC 2396)).